The primary structure comprises 481 residues: Molybdate-anion transporter (481 aa).

Helical transmembrane passes span 1–21 (MFVT…ALEI), 47–67 (LFLK…PYLY), 80–100 (IAIL…VAGW), 131–151 (FMLI…TTTF), 180–200 (WNYG…EWLG), 201–221 (LGPV…AWFV), 276–296 (VMLL…FVFL), 306–326 (PPLG…STLF), 341–361 (LLCL…FSTV), 371–391 (LLAF…VSFL), 403–423 (AVLA…LLAL), and 443–463 (FAGC…LFTV).

This sequence belongs to the major facilitator superfamily.

Its subcellular location is the cell membrane. In terms of biological role, mediates high-affinity intracellular uptake of the rare oligo-element molybdenum. The protein is Molybdate-anion transporter (mfsd5) of Danio rerio (Zebrafish).